The following is a 486-amino-acid chain: Ribulose bisphosphate carboxylase large chain, chromosomal (486 aa).

The substrate site is built by Asn-126 and Thr-176. The active-site Proton acceptor is the Lys-178. Position 180 (Lys-180) interacts with substrate. Mg(2+) is bound by residues Lys-204, Asp-206, and Glu-207. The residue at position 204 (Lys-204) is an N6-carboxylysine. The active-site Proton acceptor is the His-296. Positions 297, 329, and 381 each coordinate substrate.

Belongs to the RuBisCO large chain family. Type I subfamily. Heterohexadecamer of 8 large chains and 8 small chains; disulfide-linked. The disulfide link is formed within the large subunit homodimers. Mg(2+) serves as cofactor. The disulfide bond which can form between Cys-278 in the large chain dimeric partners within the hexadecamer appears to be associated with oxidative stress and protein turnover.

The catalysed reaction is 2 (2R)-3-phosphoglycerate + 2 H(+) = D-ribulose 1,5-bisphosphate + CO2 + H2O. It catalyses the reaction D-ribulose 1,5-bisphosphate + O2 = 2-phosphoglycolate + (2R)-3-phosphoglycerate + 2 H(+). Its function is as follows. RuBisCO catalyzes two reactions: the carboxylation of D-ribulose 1,5-bisphosphate, the primary event in carbon dioxide fixation, as well as the oxidative fragmentation of the pentose substrate. Both reactions occur simultaneously and in competition at the same active site. The protein is Ribulose bisphosphate carboxylase large chain, chromosomal (cbbL1) of Cupriavidus necator (strain ATCC 17699 / DSM 428 / KCTC 22496 / NCIMB 10442 / H16 / Stanier 337) (Ralstonia eutropha).